Consider the following 112-residue polypeptide: Protein ORF3 (112 aa).

Hydrophobic regions lie at residues 7 to 23 (ALGL…LCCP) and 40 to 60 (AAVV…PIFI). The segment at 28–66 (VSRLAVAAGKRGAAVVSGVTGLILSPSPSPIFIQPTPSH) is interaction with host HPX. The interval 70–112 (QPPPGLELALGSQSVHSAPLGVTSPSAPPLPPVVDLPQLGLRR) is homodimerization, and interaction with host AMBP/bikunin. The interval 89 to 112 (LGVTSPSAPPLPPVVDLPQLGLRR) is disordered. An interaction with host SRC, HCK, FYN, PIK3R3 and GRB2 region spans residues 93 to 102 (SPSAPPLPPV). The short motif at 94-97 (PSAP) is the PTAP/PSAP motif element.

This sequence belongs to the hepevirus ORF3 protein family. Forms homooligomers. Interacts with host SRC, HCK, FYN, PIK3R3 and GRB2 (via SH3 domain); binding does not activate the kinases. Interacts with host AMBP/bikunin and AMBP/alpha-1-microglobulin peptides. Interacts with host HPX/hemopexin. Interacts (when phosphorylated) with capsid protein ORF2. Interacts with host TSG101; this interaction plays a role in viral release from the host cell. Interacts with host SIRPA; this interaction down-regulates the phosphorylation of host IRF3. Post-translationally, palmitoylated in the N-terminus.

It localises to the host endoplasmic reticulum membrane. The protein resides in the host cytoplasm. Its subcellular location is the host cytoskeleton. The protein localises to the virion. It is found in the host cell membrane. Functionally, small multifunctional phosphoprotein involved in virion morphogenesis, egress and counteracting host innate immunity. Plays critical roles in the final steps of viral release by interacting with host TSG101, a member of the vacuolar protein-sorting pathway and using other cellular host proteins involved in vesicle formation pathway. Also acts as a viroporin and forms ion conductive pores allowing viral particle release. Impairs the generation of type I interferon by down-regulating host TLR3 and TLR7 as well as their downstream signaling pathways. Down-regulates the phosphorylation of host IRF3 via the interaction with host SIRP-alpha, thereby inhibiting IFN-I expression. Interacts with host microtubules. In Bandicota bengalensis (lesser bandicoot rat), this protein is Protein ORF3.